A 425-amino-acid polypeptide reads, in one-letter code: Gamma-glutamyl phosphate reductase (425 aa).

This sequence belongs to the gamma-glutamyl phosphate reductase family.

The protein resides in the cytoplasm. The catalysed reaction is L-glutamate 5-semialdehyde + phosphate + NADP(+) = L-glutamyl 5-phosphate + NADPH + H(+). It participates in amino-acid biosynthesis; L-proline biosynthesis; L-glutamate 5-semialdehyde from L-glutamate: step 2/2. Functionally, catalyzes the NADPH-dependent reduction of L-glutamate 5-phosphate into L-glutamate 5-semialdehyde and phosphate. The product spontaneously undergoes cyclization to form 1-pyrroline-5-carboxylate. The chain is Gamma-glutamyl phosphate reductase from Novosphingobium aromaticivorans (strain ATCC 700278 / DSM 12444 / CCUG 56034 / CIP 105152 / NBRC 16084 / F199).